Here is a 449-residue protein sequence, read N- to C-terminus: Endoglucanase A (449 aa).

A signal peptide (tat-type signal) is located at residues 1–31 (MSTRRTAAALLAAAAVAVGGLTALTTTAAQA). Residues 32 to 137 (APGCRVDYAV…SLNGTTCTGT (106 aa)) form the CBM2 domain. Cys-35 and Cys-134 are joined by a disulfide. A disordered region spans residues 127–170 (FSLNGTTCTGTVPTTSPTPTPTPTTPTPTPTPTPTPTPTVTPQP). A compositionally biased stretch (low complexity) spans 132–141 (TTCTGTVPTT). Residues 139 to 168 (PTTSPTPTPTPTTPTPTPTPTPTPTPTVTP) are linker ('hinge') (Pro-Thr box). The segment covering 142–167 (SPTPTPTPTTPTPTPTPTPTPTPTVT) has biased composition (pro residues). Asp-247 is a catalytic residue. Disulfide bonds link Cys-248–Cys-291 and Cys-390–Cys-426. The active-site Proton donor is the Asp-283. Asp-423 (nucleophile) is an active-site residue. Residues 438–449 (EIALEMARNARW) form a catalytic region.

Belongs to the glycosyl hydrolase 6 (cellulase B) family. In terms of processing, the linker region (also termed 'hinge') may be a potential site for proteolysis. Predicted to be exported by the Tat system. The position of the signal peptide cleavage has not been experimentally proven.

The enzyme catalyses Endohydrolysis of (1-&gt;4)-beta-D-glucosidic linkages in cellulose, lichenin and cereal beta-D-glucans.. The biological conversion of cellulose to glucose generally requires three types of hydrolytic enzymes: (1) Endoglucanases which cut internal beta-1,4-glucosidic bonds; (2) Exocellobiohydrolases that cut the disaccharide cellobiose from the non-reducing end of the cellulose polymer chain; (3) Beta-1,4-glucosidases which hydrolyze the cellobiose and other short cello-oligosaccharides to glucose. The sequence is that of Endoglucanase A (cenA) from Cellulomonas fimi.